Consider the following 448-residue polypeptide: UDP-N-acetylmuramoylalanine--D-glutamate ligase (448 aa).

112 to 118 (GSNAKST) is an ATP binding site.

Belongs to the MurCDEF family.

The protein resides in the cytoplasm. The catalysed reaction is UDP-N-acetyl-alpha-D-muramoyl-L-alanine + D-glutamate + ATP = UDP-N-acetyl-alpha-D-muramoyl-L-alanyl-D-glutamate + ADP + phosphate + H(+). It functions in the pathway cell wall biogenesis; peptidoglycan biosynthesis. Functionally, cell wall formation. Catalyzes the addition of glutamate to the nucleotide precursor UDP-N-acetylmuramoyl-L-alanine (UMA). The polypeptide is UDP-N-acetylmuramoylalanine--D-glutamate ligase (Acinetobacter baumannii (strain ACICU)).